We begin with the raw amino-acid sequence, 367 residues long: Voltage-gated potassium channel subunit beta-2 (367 aa).

T56, W57, Q63, and D85 together coordinate NADP(+). The active-site Proton donor/acceptor is Y90. Residues N158, S188, R189, Q214, W243, S244, P245, L246, A247, C248, K254, Y262, R264, G323, S325, Q329, E332, and N333 each contribute to the NADP(+) site.

The protein belongs to the shaker potassium channel beta subunit family. Forms heteromultimeric complex with alpha subunits.

Its subcellular location is the cytoplasm. It localises to the membrane. The protein localises to the cell membrane. It is found in the cell projection. The protein resides in the axon. Its subcellular location is the synapse. It localises to the synaptosome. The protein localises to the cytoskeleton. Functionally, regulatory subunit of the voltage-gated potassium (Kv) Shaker channels composed of pore-forming and potassium-conducting alpha subunits and of regulatory beta subunits. The beta-2/KCNAB2 cytoplasmic subunit may promote potassium channel closure via a mechanism that does not involve physical obstruction of the channel pore. Enhances current amplitude of Kv1.1/KCNA1 and Kv2.2/KCNA2 channels. May display nicotinamide adenine dinucleotide phosphate (NADPH)-dependent aldoketoreductase activity by catalyzing the NADPH-dependent reduction of a wide range of aldehyde and ketone substrates. The binding of oxidized and reduced nucleotide may alter Kv channel gating and contribute to dynamic fine tuning of cell excitability. The polypeptide is Voltage-gated potassium channel subunit beta-2 (kcnab2) (Xenopus laevis (African clawed frog)).